The sequence spans 197 residues: Large ribosomal subunit protein bL25 (197 aa).

It belongs to the bacterial ribosomal protein bL25 family. CTC subfamily. Part of the 50S ribosomal subunit; part of the 5S rRNA/L5/L18/L25 subcomplex. Contacts the 5S rRNA. Binds to the 5S rRNA independently of L5 and L18.

In terms of biological role, this is one of the proteins that binds to the 5S RNA in the ribosome where it forms part of the central protuberance. This Pseudomonas putida (strain ATCC 700007 / DSM 6899 / JCM 31910 / BCRC 17059 / LMG 24140 / F1) protein is Large ribosomal subunit protein bL25.